The sequence spans 517 residues: UDP-N-acetylmuramoylalanine--D-glutamate ligase (517 aa).

ATP is bound at residue 143-149; that stretch reads GTNGKTT.

This sequence belongs to the MurCDEF family.

The protein localises to the cytoplasm. The enzyme catalyses UDP-N-acetyl-alpha-D-muramoyl-L-alanine + D-glutamate + ATP = UDP-N-acetyl-alpha-D-muramoyl-L-alanyl-D-glutamate + ADP + phosphate + H(+). The protein operates within cell wall biogenesis; peptidoglycan biosynthesis. Its function is as follows. Cell wall formation. Catalyzes the addition of glutamate to the nucleotide precursor UDP-N-acetylmuramoyl-L-alanine (UMA). This chain is UDP-N-acetylmuramoylalanine--D-glutamate ligase, found in Leifsonia xyli subsp. xyli (strain CTCB07).